The chain runs to 64 residues: Large ribosomal subunit protein bL35 (64 aa).

Over residues Met-1–Lys-14 the composition is skewed to basic residues. The segment at Met-1–Ala-50 is disordered. Over residues Leu-21 to Pro-36 the composition is skewed to basic and acidic residues.

Belongs to the bacterial ribosomal protein bL35 family.

In Corynebacterium diphtheriae (strain ATCC 700971 / NCTC 13129 / Biotype gravis), this protein is Large ribosomal subunit protein bL35.